Reading from the N-terminus, the 436-residue chain is ABC transporter permease YtrF (436 aa).

An N-terminal signal peptide occupies residues 1–31 (MRFKDQVHFIRRNMKKNRLRVFMTILATTMA). A lipid anchor (N-palmitoyl cysteine) is attached at Cys32. Cys32 carries the S-diacylglycerol cysteine lipid modification. Residues 115-165 (NMNDELKANMELEKGRVAKSENEIVVGYDFAKRLLTKKESEEYNKKIEEAK) are a coiled coil. 3 helical membrane passes run 293 to 313 (FKIG…IGIF), 350 to 370 (YIGI…SYLV), and 396 to 416 (IPAS…VISG).

It belongs to the ABC-4 integral membrane protein family. The complex is composed of 2 ATP-binding proteins (YtrB and YtrE), 2 transmembrane proteins (YtrC and YtrD) and a solute-binding protein (YtrF).

It localises to the cell membrane. Part of the ABC transporter complex YtrBCDEF that plays a role in acetoin utilization during stationary phase and sporulation. The protein is ABC transporter permease YtrF (ytrF) of Bacillus subtilis (strain 168).